The chain runs to 319 residues: MNAALDDKAAKKAAFEGNKLAKRLRHHVGDAINDFNMIEEGDRVMVCLSGGKDSYTLLDILRGLQKSAPINFSIVAVNLDQKQPGFPEHVLPEYLKSIGVEYRIVEEDTYSIVKRLVPEGKTTCSLCSRLRRGILYRVADELGATKIALGHHRDDILHTLFLNMFYGGKMKAMPPKLVSDDGRHMVIRPLAYCREKDIIRYADWKAFPIIPCNLCGSQPNLQRQVVKEMVNDWDKRFPGRVESMFRALQNVVPSHLADPKLFDFVGLQTGDAPFADGDTAFDKEEFRDPAPDADDVEDAPKKRTISILDSRGKESGCGA.

The short motif at 49–54 (SGGKDS) is the PP-loop motif element. [4Fe-4S] cluster contacts are provided by Cys124, Cys127, and Cys215. Positions 276 to 319 (DGDTAFDKEEFRDPAPDADDVEDAPKKRTISILDSRGKESGCGA) are disordered. 2 stretches are compositionally biased toward basic and acidic residues: residues 280–290 (AFDKEEFRDPA) and 310–319 (SRGKESGCGA).

This sequence belongs to the TtcA family. In terms of assembly, homodimer. It depends on Mg(2+) as a cofactor. [4Fe-4S] cluster serves as cofactor.

The protein resides in the cytoplasm. The enzyme catalyses cytidine(32) in tRNA + S-sulfanyl-L-cysteinyl-[cysteine desulfurase] + AH2 + ATP = 2-thiocytidine(32) in tRNA + L-cysteinyl-[cysteine desulfurase] + A + AMP + diphosphate + H(+). It participates in tRNA modification. Its function is as follows. Catalyzes the ATP-dependent 2-thiolation of cytidine in position 32 of tRNA, to form 2-thiocytidine (s(2)C32). The sulfur atoms are provided by the cysteine/cysteine desulfurase (IscS) system. The chain is tRNA-cytidine(32) 2-sulfurtransferase from Chromobacterium violaceum (strain ATCC 12472 / DSM 30191 / JCM 1249 / CCUG 213 / NBRC 12614 / NCIMB 9131 / NCTC 9757 / MK).